Here is a 534-residue protein sequence, read N- to C-terminus: Pentatricopeptide repeat-containing protein At5g50990 (534 aa).

PPR repeat units follow at residues 128 to 158 (NVITWNLMIGGYVRNVQYEEALKALKNMLSF), 164 to 198 (NKFSFASSLAACARLGDLHHAKWVHSLMIDSGIEL), 199 to 229 (NAILSSALVDVYAKCGDIGTSREVFYSVKRN), 230 to 264 (DVSIWNAMITGFATHGLATEAIRVFSEMEAEHVSP), 265 to 295 (DSITFLGLLTTCSHCGLLEEGKEYFGLMSRR), and 301 to 331 (KLEHYGAMVDLLGRAGRVKEAYELIESMPIE). The segment at 336–408 (IWRSLLSSSR…AKGKSWLEFG (73 aa)) is type E motif. A type E(+) motif region spans residues 409–439 (GMIHRFKAGDTSHIETKAIYKVLEGLIQKTK). The tract at residues 440 to 534 (SQGFVSDTDL…DGLCSCRDYW (95 aa)) is type DYW motif.

Belongs to the PPR family. PCMP-H subfamily.

This Arabidopsis thaliana (Mouse-ear cress) protein is Pentatricopeptide repeat-containing protein At5g50990 (PCMP-H59).